The chain runs to 489 residues: Mitochondrial distribution and morphology protein 10 (489 aa).

This sequence belongs to the MDM10 family. In terms of assembly, component of the ER-mitochondria encounter structure (ERMES) or MDM complex, composed of MMM1, MDM10, MDM12 and MDM34. Associates with the mitochondrial outer membrane sorting assembly machinery SAM(core) complex.

The protein localises to the mitochondrion outer membrane. Its function is as follows. Component of the ERMES/MDM complex, which serves as a molecular tether to connect the endoplasmic reticulum and mitochondria. Components of this complex are involved in the control of mitochondrial shape and protein biogenesis and may function in phospholipid exchange. MDM10 is involved in the late assembly steps of the general translocase of the mitochondrial outer membrane (TOM complex). Functions in the TOM40-specific route of the assembly of outer membrane beta-barrel proteins, including the association of TOM40 with the receptor TOM22 and small TOM proteins. Can associate with the SAM(core) complex as well as the MDM12-MMM1 complex, both involved in late steps of the major beta-barrel assembly pathway, that is responsible for biogenesis of all outer membrane beta-barrel proteins. May act as a switch that shuttles between both complexes and channels precursor proteins into the TOM40-specific pathway. Plays a role in mitochondrial morphology and in the inheritance of mitochondria. In Arthroderma otae (strain ATCC MYA-4605 / CBS 113480) (Microsporum canis), this protein is Mitochondrial distribution and morphology protein 10.